The primary structure comprises 291 residues: Isopentenyl-diphosphate Delta-isomerase I, chloroplastic (291 aa).

Residues 1-52 (MSTASLFSFPSFHLRSLLPSLSSSSSSSSSRFAPPRLSPIRSPAPRTQLSVR) constitute a chloroplast transit peptide. Residue Ser2 is modified to N-acetylthreonine. The span at 20–39 (SLSSSSSSSSSRFAPPRLSP) shows a compositional bias: low complexity. The interval 20 to 43 (SLSSSSSSSSSRFAPPRLSPIRSP) is disordered. Lys95 contacts substrate. Positions 99 and 111 each coordinate Mg(2+). Residues 109–261 (LLHRAFSVFL…AVKLSPWFRL (153 aa)) form the Nudix hydrolase domain. The substrate site is built by Arg130 and Lys134. Cys146 is an active-site residue. Ser147 contacts substrate. A Nudix box motif is present at residues 147–177 (SHPLYRESELIEENVLGVRNAAQRKLFDELG). Mg(2+) contacts are provided by Glu206 and Glu208. Residue Glu208 is part of the active site.

The protein belongs to the IPP isomerase type 1 family. Mg(2+) is required as a cofactor.

It is found in the plastid. The protein localises to the chloroplast. The protein resides in the cytoplasm. It catalyses the reaction isopentenyl diphosphate = dimethylallyl diphosphate. The protein operates within isoprenoid biosynthesis; dimethylallyl diphosphate biosynthesis; dimethylallyl diphosphate from isopentenyl diphosphate: step 1/1. Its pathway is porphyrin-containing compound metabolism; chlorophyll biosynthesis. Functionally, catalyzes the 1,3-allylic rearrangement of the homoallylic substrate isopentenyl (IPP) to its highly electrophilic allylic isomer, dimethylallyl diphosphate (DMAPP). This is Isopentenyl-diphosphate Delta-isomerase I, chloroplastic (IPP1) from Arabidopsis thaliana (Mouse-ear cress).